A 460-amino-acid polypeptide reads, in one-letter code: Omega-3 fatty acid desaturase, chloroplastic (460 aa).

A Histidine box-1 motif is present at residues 177 to 181 (HDCGH). The Histidine box-2 motif lies at 213-217 (HRTHH). A Histidine box-3 motif is present at residues 380–384 (HVIHH).

The protein belongs to the fatty acid desaturase type 1 family.

The protein localises to the plastid. It is found in the chloroplast membrane. It functions in the pathway lipid metabolism; polyunsaturated fatty acid biosynthesis. Functionally, chloroplast omega-3 fatty acid desaturase introduces the third double bond in the biosynthesis of 16:3 and 18:3 fatty acids, important constituents of plant membranes. It is thought to use ferredoxin as an electron donor and to act on fatty acids esterified to galactolipids, sulfolipids and phosphatidylglycerol. In Ricinus communis (Castor bean), this protein is Omega-3 fatty acid desaturase, chloroplastic (FAD7A-1).